The chain runs to 216 residues: Somatotropin (216 aa).

An N-terminal signal peptide occupies residues 1–26 (MAASPRNSVLLAFALLCLPWPQEVGA). His45 is a binding site for Zn(2+). A disulfide bond links Cys78 and Cys189. Ser131 carries the phosphoserine modification. Glu198 serves as a coordination point for Zn(2+). Cys206 and Cys214 are oxidised to a cystine.

It belongs to the somatotropin/prolactin family.

The protein localises to the secreted. Its function is as follows. Plays an important role in growth control. Its major role in stimulating body growth is to stimulate the liver and other tissues to secrete IGF1. It stimulates both the differentiation and proliferation of myoblasts. It also stimulates amino acid uptake and protein synthesis in muscle and other tissues. This chain is Somatotropin (GH1), found in Canis lupus familiaris (Dog).